Consider the following 226-residue polypeptide: ATP synthase subunit a (226 aa).

Helical transmembrane passes span 17–37 (FLFVSHMFLAALLTLIVAKLA), 78–98 (LVATLGLFIFFANLMEIIPGF), 104–124 (NINFTLALALIVFIYYNFEGI), 175–195 (LFVWVLLMLAPWIVPLPGFAL), and 201–221 (FLQTFIFMILTYVYLAGAVLL).

The protein belongs to the ATPase A chain family. In terms of assembly, F-type ATPases have 2 components, CF(1) - the catalytic core - and CF(0) - the membrane proton channel. CF(1) has five subunits: alpha(3), beta(3), gamma(1), delta(1), epsilon(1). CF(0) has three main subunits: a(1), b(2) and c(9-12). The alpha and beta chains form an alternating ring which encloses part of the gamma chain. CF(1) is attached to CF(0) by a central stalk formed by the gamma and epsilon chains, while a peripheral stalk is formed by the delta and b chains.

It is found in the cell inner membrane. Its function is as follows. Key component of the proton channel; it plays a direct role in the translocation of protons across the membrane. The polypeptide is ATP synthase subunit a (Nitratiruptor sp. (strain SB155-2)).